The sequence spans 110 residues: UPF0122 protein SP70585_1353 (110 aa).

Belongs to the UPF0122 family.

Its function is as follows. Might take part in the signal recognition particle (SRP) pathway. This is inferred from the conservation of its genetic proximity to ftsY/ffh. May be a regulatory protein. This Streptococcus pneumoniae (strain 70585) protein is UPF0122 protein SP70585_1353.